Consider the following 179-residue polypeptide: Ubiquinol-cytochrome c reductase iron-sulfur subunit (179 aa).

A helical membrane pass occupies residues 14–35 (FLYVATAAVGAAGVAAVAWPFI). The region spanning 80 to 173 (AKEIQSEEAA…YEFVDNTKIR (94 aa)) is the Rieske domain. [2Fe-2S] cluster contacts are provided by C118, H120, C137, and H140. C123 and C139 are disulfide-bonded.

The protein belongs to the Rieske iron-sulfur protein family. In terms of assembly, the main subunits of complex b-c1 are: cytochrome b, cytochrome c1 and the Rieske protein. Requires [2Fe-2S] cluster as cofactor.

The protein resides in the cell membrane. The catalysed reaction is a quinol + 2 Fe(III)-[cytochrome c](out) = a quinone + 2 Fe(II)-[cytochrome c](out) + 2 H(+)(out). Functionally, component of the ubiquinol-cytochrome c reductase complex (complex III or cytochrome b-c1 complex), which is a respiratory chain that generates an electrochemical potential coupled to ATP synthesis. This chain is Ubiquinol-cytochrome c reductase iron-sulfur subunit (petA), found in Blastochloris viridis (Rhodopseudomonas viridis).